Reading from the N-terminus, the 398-residue chain is MTRTDTRSYPFGDPVALDLHPGYAPLRAEQPALRVRLPYGEDCWLVTRHEDVKAVLSDSRFSRARAAGREETPRVTPEAAPAGSMLSMDPPEHSRLRKLIARAFTSRRVREFRPRTQEIVDGLLDQVEQAGAPADLVAGLALPLPVSVISQMLGVPTEDHYRFRDFSATVLSTTAHTREEIVAARAALEEYLGELADQRRREPGEDLMSALVAAHDDDRLTDRELTQTGITLLVGGHESTASQFACSVYLLLERPERWALLRDNPELVPTAVEELLRFIPLGSGGAFARIATEDVEVGGVLVRAGEAVVASTNSANRDDRVFTDPDVLDLAREHNPHLAFGGGVHVCLGAQLARGELQVALTSLLTRFPGLRLAVPPEQVPWRQGSLLRSPVELPVTW.

The tract at residues 63-90 is disordered; sequence RARAAGREETPRVTPEAAPAGSMLSMDP. 5 residues coordinate heme: histidine 93, arginine 97, arginine 289, histidine 345, and cysteine 347.

It belongs to the cytochrome P450 family. Requires heme as cofactor.

It catalyses the reaction nocardicin C + 4 reduced [2Fe-2S]-[ferredoxin] + 2 O2 + 2 H(+) = nocardicin A + 4 oxidized [2Fe-2S]-[ferredoxin] + 3 H2O. It participates in antibiotic biosynthesis. Functionally, involved in the biosynthesis of the beta-lactam antibiotic nocardicin A. Catalyzes the conversion of nocardicin C to nocardicin A. Cannot use nocardicin G. The chain is Nocardicin C N-oxygenase from Nocardia uniformis subsp. tsuyamanensis.